Consider the following 564-residue polypeptide: Septation ring formation regulator EzrA (564 aa).

The Extracellular portion of the chain corresponds to 1–4 (MVLF). The chain crosses the membrane as a helical span at residues 5 to 23 (IILAILVVILIAIGVLFYM). Residues 24–564 (RSNKRNLIEK…KHIEEQVIKE (541 aa)) lie on the Cytoplasmic side of the membrane. Coiled-coil stretches lie at residues 84 to 126 (VEEK…HQVT), 165 to 223 (EAAE…LIRE), 271 to 303 (MISRLELDEANNKLENINDKLDEMYDLIEYEVK), and 350 to 435 (VRQF…RRLL).

It belongs to the EzrA family.

Its subcellular location is the cell membrane. In terms of biological role, negative regulator of FtsZ ring formation; modulates the frequency and position of FtsZ ring formation. Inhibits FtsZ ring formation at polar sites. Interacts either with FtsZ or with one of its binding partners to promote depolymerization. This Staphylococcus epidermidis (strain ATCC 12228 / FDA PCI 1200) protein is Septation ring formation regulator EzrA.